Here is a 445-residue protein sequence, read N- to C-terminus: tRNA-2-methylthio-N(6)-dimethylallyladenosine synthase (445 aa).

Residues lysine 3–arginine 124 enclose the MTTase N-terminal domain. Residues cysteine 12, cysteine 48, cysteine 87, cysteine 162, cysteine 166, and cysteine 169 each contribute to the [4Fe-4S] cluster site. One can recognise a Radical SAM core domain in the interval tyrosine 148–alanine 380. The region spanning threonine 383–leucine 445 is the TRAM domain.

Belongs to the methylthiotransferase family. MiaB subfamily. Monomer. It depends on [4Fe-4S] cluster as a cofactor.

It is found in the cytoplasm. The enzyme catalyses N(6)-dimethylallyladenosine(37) in tRNA + (sulfur carrier)-SH + AH2 + 2 S-adenosyl-L-methionine = 2-methylsulfanyl-N(6)-dimethylallyladenosine(37) in tRNA + (sulfur carrier)-H + 5'-deoxyadenosine + L-methionine + A + S-adenosyl-L-homocysteine + 2 H(+). Functionally, catalyzes the methylthiolation of N6-(dimethylallyl)adenosine (i(6)A), leading to the formation of 2-methylthio-N6-(dimethylallyl)adenosine (ms(2)i(6)A) at position 37 in tRNAs that read codons beginning with uridine. The protein is tRNA-2-methylthio-N(6)-dimethylallyladenosine synthase of Rickettsia rickettsii (strain Iowa).